Consider the following 277-residue polypeptide: Protein CIMAP1D (277 aa).

STPGR repeat units lie at residues 122–148 (PGPG…LGSR), 202–227 (PGPG…ILGR), and 238–263 (PGPG…MGIR). The disordered stretch occupies residues 181 to 277 (PSYTVVGRTP…ASTMVGDTKC (97 aa)).

This sequence belongs to the CIMAP family.

In Mus musculus (Mouse), this protein is Protein CIMAP1D (Cimap1d).